We begin with the raw amino-acid sequence, 460 residues long: Phosphoglucosamine mutase (460 aa).

The Phosphoserine intermediate role is filled by serine 102. Mg(2+)-binding residues include serine 102, aspartate 241, aspartate 243, and aspartate 245. Position 102 is a phosphoserine (serine 102).

This sequence belongs to the phosphohexose mutase family. Requires Mg(2+) as cofactor. Post-translationally, activated by phosphorylation.

The catalysed reaction is alpha-D-glucosamine 1-phosphate = D-glucosamine 6-phosphate. Its function is as follows. Catalyzes the conversion of glucosamine-6-phosphate to glucosamine-1-phosphate. In Verminephrobacter eiseniae (strain EF01-2), this protein is Phosphoglucosamine mutase.